A 67-amino-acid chain; its full sequence is Moricin (67 aa).

The N-terminal stretch at 1–23 (MKLTSLFIFVIVALSLLFSSTDA) is a signal peptide.

Belongs to the moricin family. Monomer.

It is found in the secreted. Its function is as follows. Antimicrobial peptide. Active against a broad spectrum of Gram-positive and Gram-negative bacteria including methicillin-resistant S.aureus ATCC 43 300, S.aureus BAA-39, pathogenic strains of L.monocytogenes, K.pneumoniae, E.coli O157:H7, S.typhimurium and multidrug-resistant S.typhimurium DT104 with minimum inhibitory concentration (MIC) of 1.4 uM for all except for S.aureus BAA-39. Also active against Serratia marcescens. Probably acts by disturbing membrane functions with its amphipathic alpha-helical structure. May protect a developing embryo from bacterial infection. The sequence is that of Moricin from Manduca sexta (Tobacco hawkmoth).